The chain runs to 578 residues: L-ascorbate oxidase (578 aa).

A signal peptide spans 1 to 28 (MASLGFLFFFLLPLILLELSSSRSVMAA). 2 consecutive Plastocyanin-like domains span residues 30–149 (TRHF…LIVE) and 161–328 (DGEF…NYLP). Cu cation contacts are provided by H87, H89, H131, and H133. 2 disulfide bridges follow: C108-C565 and C207-C221. N-linked (GlcNAc...) asparagine glycosylation occurs at N206. N-linked (GlcNAc...) asparagine glycans are attached at residues N349, N394, N438, and N451. The Plastocyanin-like 3 domain maps to 372-550 (HRRIILLNTQ…HMGMGVIFAE (179 aa)). Cu cation contacts are provided by H472, H475, H477, H533, C534, H535, H539, and M544.

This sequence belongs to the multicopper oxidase family. As to quaternary structure, dimer. Cu cation serves as cofactor. As to expression, highly expressed in young and growing tissues.

It is found in the secreted. The catalysed reaction is 4 L-ascorbate + O2 = 4 monodehydro-L-ascorbate radical + 2 H2O. May be involved in a redox system involving ascorbic acid. The protein is L-ascorbate oxidase (AAO) of Nicotiana tabacum (Common tobacco).